We begin with the raw amino-acid sequence, 430 residues long: Enolase (430 aa).

Glutamine 163 provides a ligand contact to (2R)-2-phosphoglycerate. Catalysis depends on glutamate 205, which acts as the Proton donor. Residues aspartate 242, glutamate 287, and aspartate 314 each contribute to the Mg(2+) site. Residues lysine 339, arginine 368, serine 369, and lysine 390 each contribute to the (2R)-2-phosphoglycerate site. Residue lysine 339 is the Proton acceptor of the active site.

It belongs to the enolase family. Requires Mg(2+) as cofactor.

Its subcellular location is the cytoplasm. The protein resides in the secreted. It is found in the cell surface. The enzyme catalyses (2R)-2-phosphoglycerate = phosphoenolpyruvate + H2O. Its pathway is carbohydrate degradation; glycolysis; pyruvate from D-glyceraldehyde 3-phosphate: step 4/5. In terms of biological role, catalyzes the reversible conversion of 2-phosphoglycerate (2-PG) into phosphoenolpyruvate (PEP). It is essential for the degradation of carbohydrates via glycolysis. The sequence is that of Enolase from Listeria innocua serovar 6a (strain ATCC BAA-680 / CLIP 11262).